The chain runs to 133 residues: Oocytes ribonuclease (133 aa).

A signal peptide spans 1-22 (MCAKSLLLVFGILLGLSHLSLS). Position 23 is a pyrrolidone carboxylic acid (glutamine 23). Residue histidine 32 is the Proton acceptor of the active site. 4 disulfides stabilise this stretch: cysteine 41-cysteine 93, cysteine 56-cysteine 103, cysteine 74-cysteine 118, and cysteine 115-cysteine 132. 57–61 (KRVNT) contributes to the substrate binding site. The Proton donor role is filled by histidine 125.

Belongs to the pancreatic ribonuclease family. As to quaternary structure, monomer.

The protein resides in the secreted. Its function is as follows. Preferentially cleaves single-stranded RNA at pyrimidine residues with a 3'flanking guanine. Hydrolyzes poly(U) and poly(C) as substrates, and prefers the former. The S-lectins in frog eggs may be involved in the fertilization and development of the frog embryo. This lectin agglutinates various animal cells, including normal lymphocytes, erythrocytes, and fibroblasts of animal and human origin. It is cytotoxic against several tumor cells. The protein is Oocytes ribonuclease (RCR) of Aquarana catesbeiana (American bullfrog).